The chain runs to 375 residues: Probable pectin lyase C (375 aa).

Residues 1–20 (MKITSTIPAVLLGLAPLSAA) form the signal peptide. 2 disulfide bridges follow: cysteine 83/cysteine 100 and cysteine 92/cysteine 220. Arginine 250 is a catalytic residue. A disulfide bridge connects residues cysteine 317 and cysteine 325.

This sequence belongs to the polysaccharide lyase 1 family.

The protein localises to the secreted. The enzyme catalyses Eliminative cleavage of (1-&gt;4)-alpha-D-galacturonan methyl ester to give oligosaccharides with 4-deoxy-6-O-methyl-alpha-D-galact-4-enuronosyl groups at their non-reducing ends.. Functionally, pectinolytic enzymes consist of four classes of enzymes: pectin lyase, polygalacturonase, pectin methylesterase and rhamnogalacturonase. Among pectinolytic enzymes, pectin lyase is the most important in depolymerization of pectin, since it cleaves internal glycosidic bonds of highly methylated pectins. This chain is Probable pectin lyase C (pelC), found in Aspergillus oryzae (strain ATCC 42149 / RIB 40) (Yellow koji mold).